The primary structure comprises 129 residues: Small ribosomal subunit protein uS11 (129 aa).

It belongs to the universal ribosomal protein uS11 family. As to quaternary structure, part of the 30S ribosomal subunit. Interacts with proteins S7 and S18. Binds to IF-3.

Its function is as follows. Located on the platform of the 30S subunit, it bridges several disparate RNA helices of the 16S rRNA. Forms part of the Shine-Dalgarno cleft in the 70S ribosome. This is Small ribosomal subunit protein uS11 from Brucella abortus (strain S19).